Consider the following 158-residue polypeptide: Cyclic pyranopterin monophosphate synthase (158 aa).

Substrate contacts are provided by residues 75–77 and 113–114; these read LCH and ME. Asp-128 is a catalytic residue.

The protein belongs to the MoaC family. In terms of assembly, homohexamer; trimer of dimers.

It catalyses the reaction (8S)-3',8-cyclo-7,8-dihydroguanosine 5'-triphosphate = cyclic pyranopterin phosphate + diphosphate. The protein operates within cofactor biosynthesis; molybdopterin biosynthesis. Its function is as follows. Catalyzes the conversion of (8S)-3',8-cyclo-7,8-dihydroguanosine 5'-triphosphate to cyclic pyranopterin monophosphate (cPMP). This Histophilus somni (strain 2336) (Haemophilus somnus) protein is Cyclic pyranopterin monophosphate synthase.